A 244-amino-acid polypeptide reads, in one-letter code: Capsid protein (244 aa).

A Bipartite nuclear localization signal motif is present at residues 1–24 (MSTSKRKRADEAQWNKRSTKKKGS). The tract at residues 1–39 (MSTSKRKRADEAQWNKRSTKKKGSAPQAKKPGGKGERPS) is disordered.

It belongs to the geminiviridae capsid protein family. In terms of assembly, homomultimer. Interacts with the movement protein. Binds to single-stranded and double-stranded viral DNA.

Its subcellular location is the virion. It localises to the host nucleus. In terms of biological role, encapsidates the viral genome into characteristic twinned ('geminate') particles. Binds the genomic viral ssDNA and shuttles it into and out of the cell nucleus. Plays a role in protection of the genome from degradation, virus acquisition and transmission by insect vectors, infectivity, and systemic movement. The CP of monopartite geminiviruses is absolutely essential for virus movement. This chain is Capsid protein, found in Avena sativa (Oat).